The primary structure comprises 332 residues: Large ribosomal subunit protein mL44 (332 aa).

Residues 1-30 (MASGLVRLLQQGPRCLLAPVAPKLVPPVRG) constitute a mitochondrion transit peptide. An RNase III domain is found at 86–228 (DLLKTAFVNS…LITQMTGKEL (143 aa)). A DRBM domain is found at 236–306 (NPMGLLVEEL…ARVALRKLYG (71 aa)).

This sequence belongs to the ribonuclease III family. Mitochondrion-specific ribosomal protein mL44 subfamily. In terms of assembly, component of the mitochondrial ribosome large subunit (39S) which comprises a 16S rRNA and about 50 distinct proteins.

It localises to the mitochondrion. Its function is as follows. Component of the 39S subunit of mitochondrial ribosome. May have a function in the assembly/stability of nascent mitochondrial polypeptides exiting the ribosome. In Pongo abelii (Sumatran orangutan), this protein is Large ribosomal subunit protein mL44 (MRPL44).